Here is a 376-residue protein sequence, read N- to C-terminus: Peroxisomal membrane protein PEX14 (376 aa).

Over residues 1–12 (MASSEQAEQPNQ) the composition is skewed to polar residues. The interval 1-24 (MASSEQAEQPNQPSSPPGSENVVP) is disordered. N-acetylalanine is present on Ala2. The Peroxisomal portion of the chain corresponds to 2–108 (ASSEQAEQPN…YSPRGSRWRD (107 aa)). Lys34 is subject to N6-acetyllysine. The segment at 70 to 102 (SGTAADEPSPLGPATPVVPVQPPHLTPQPYSPR) is disordered. The span at 88–99 (PVQPPHLTPQPY) shows a compositional bias: pro residues. A helical transmembrane segment spans residues 109–127 (YGALAIIMAGIAFGFHQLY). The Cytoplasmic portion of the chain corresponds to 128-376 (KRYLLPLILG…EGASNETERD (249 aa)). The disordered stretch occupies residues 230 to 376 (PPSPSAPKIP…EGASNETERD (147 aa)). A Phosphoserine modification is found at Ser232. Composition is skewed to low complexity over residues 247 to 259 (SSSPSSPAAVNHH) and 265 to 275 (SPVSNESTSSS). Residues Ser282 and Ser334 each carry the phosphoserine modification. Positions 323 to 341 (KEDEDDEDDDVSHVDEEDV) are enriched in acidic residues. Basic and acidic residues predominate over residues 359 to 376 (QVEKLRRPEGASNETERD).

The protein belongs to the peroxin-14 family. As to quaternary structure, interacts with PEX13; forming the PEX13-PEX14 docking complex. Interacts with PEX5 (via WxxxF/Y motifs). Interacts with PEX19. Interacts with tubulin.

It is found in the peroxisome membrane. In terms of biological role, component of the PEX13-PEX14 docking complex, a translocon channel that specifically mediates the import of peroxisomal cargo proteins bound to PEX5 receptor. The PEX13-PEX14 docking complex forms a large import pore which can be opened to a diameter of about 9 nm. Mechanistically, PEX5 receptor along with cargo proteins associates with the PEX14 subunit of the PEX13-PEX14 docking complex in the cytosol, leading to the insertion of the receptor into the organelle membrane with the concomitant translocation of the cargo into the peroxisome matrix. Plays a key role for peroxisome movement through a direct interaction with tubulin. In Mus musculus (Mouse), this protein is Peroxisomal membrane protein PEX14.